Reading from the N-terminus, the 179-residue chain is MTPRRKSRMTVILFVLLGISIASALVLYALRQNIDLFYTPTEVVYGKNEDATQKPSVGQRIRVGGMVVAGTVERDPKSLKVKFDLNDIGPSISVEYEGILPDLFREGQGIVAQGVLKTPTLLEATEVLAKHDENYVPPELDAQMQKVHKPMGVADLKGESERDRQEKAYQKTSMQEGQK.

Residues 1-8 (MTPRRKSR) lie on the Cytoplasmic side of the membrane. A helical; Signal-anchor for type II membrane protein transmembrane segment spans residues 9 to 29 (MTVILFVLLGISIASALVLYA). The Periplasmic portion of the chain corresponds to 30–179 (LRQNIDLFYT…QKTSMQEGQK (150 aa)). Heme-binding residues include His-131 and Tyr-135. The segment at 151–179 (MGVADLKGESERDRQEKAYQKTSMQEGQK) is disordered. The segment covering 156–169 (LKGESERDRQEKAY) has biased composition (basic and acidic residues). The span at 170-179 (QKTSMQEGQK) shows a compositional bias: polar residues.

Belongs to the CcmE/CycJ family.

The protein resides in the cell inner membrane. Functionally, heme chaperone required for the biogenesis of c-type cytochromes. Transiently binds heme delivered by CcmC and transfers the heme to apo-cytochromes in a process facilitated by CcmF and CcmH. The chain is Cytochrome c-type biogenesis protein CcmE from Pasteurella multocida (strain Pm70).